The chain runs to 231 residues: UPF0749 protein YlxW (231 aa).

The first 34 residues, 1–34 (MRGKSAVLLSLIMLIAGFLISFSFQMTKENNKSA), serve as a signal peptide directing secretion. Residues 44 to 94 (YALRDELLKQEKENKKFEKELYQKQNKVRQAENKLKKEKSEYYNVLEDTEK) adopt a coiled-coil conformation.

The protein belongs to the UPF0749 family.

Its function is as follows. May be involved in cell division and sporulation. The chain is UPF0749 protein YlxW (ylxW) from Bacillus subtilis (strain 168).